We begin with the raw amino-acid sequence, 221 residues long: Serine/arginine-rich splicing factor 2 (221 aa).

Position 2 is an N-acetylserine (serine 2). A Phosphoserine modification is found at serine 2. Residues 14–92 enclose the RRM domain; that stretch reads TSLKVDNLTY…RELRVQMARY (79 aa). Threonine 22 and threonine 25 each carry phosphothreonine. Serine 26 is subject to Phosphoserine. Lysine 52 is modified (N6-acetyllysine). The tract at residues 92–221 is disordered; that stretch reads YGRPPDSHHS…SPEEEGAVSS (130 aa). 2 stretches are compositionally biased toward basic residues: residues 117–171 and 179–189; these read RRSR…RSKS and SRSRSRSRSRS. Serine 189, serine 191, serine 204, serine 206, serine 208, serine 212, and serine 220 each carry phosphoserine.

It belongs to the splicing factor SR family. In terms of assembly, interacts with CCNL1 and CCNL2. Interacts with SCAF11. Interacts with ZRSR2/U2AF1-RS2. Interacts with CCDC55 (via C-terminus). In vitro, self-associates and binds SRSF1/SFRS1 (ASF/SF2), SNRNP70 and U2AF1 but not U2AF2. Binds SREK1/SFRS12. Interacts with BRDT. Post-translationally, extensively phosphorylated on serine residues in the RS domain. Phosphorylated by SRPK2 and this causes its redistribution from the nuclear speckle to nucleoplasm and controls cell fate decision in response to cisplatin treatment. KAT5/TIP60 inhibits its phosphorylation by preventing SRPK2 nuclear translocation. In terms of processing, acetylation on Lys-52 by KAT5/TIP60 promotes its proteasomal degradation. This effect is counterbalanced by HDAC6, which positively controls SRSF2 protein level by deacetylating it and preventing its proteasomal degradation. As to expression, expressed in all the tissues examined; liver, kidney, spleen, heart, lung and brain.

Its subcellular location is the nucleus. It localises to the nucleoplasm. It is found in the nucleus speckle. Its function is as follows. Necessary for the splicing of pre-mRNA. It is required for formation of the earliest ATP-dependent splicing complex and interacts with spliceosomal components bound to both the 5'- and 3'-splice sites during spliceosome assembly. It also is required for ATP-dependent interactions of both U1 and U2 snRNPs with pre-mRNA. Can bind to the myelin basic protein (MBP) gene MB3 regulatory region and increase transcription of the mbp promoter in cells derived from the CNS. The phosphorylated form (by SRPK2) is required for cellular apoptosis in response to cisplatin treatment. The protein is Serine/arginine-rich splicing factor 2 (Srsf2) of Mus musculus (Mouse).